The following is a 66-amino-acid chain: MPKLKTKSSAKKRFKVTASGRVMSAQSTKRHGMTKRSKRSLRTRRGIAQMSAPDARIVASFMPYSL.

Composition is skewed to basic residues over residues 1–15 (MPKL…KRFK) and 28–45 (TKRH…RTRR). The tract at residues 1–49 (MPKLKTKSSAKKRFKVTASGRVMSAQSTKRHGMTKRSKRSLRTRRGIAQ) is disordered.

Belongs to the bacterial ribosomal protein bL35 family.

The polypeptide is Large ribosomal subunit protein bL35 (Anaplasma marginale (strain Florida)).